The primary structure comprises 140 residues: UPF0654 protein C22G7.11c (140 aa).

Disordered stretches follow at residues 1–88 and 110–140; these read MPDP…DPMK and YKATMHNPNVSKQAKTRAQRALEEIDDETQA. Over residues 24–33 the composition is skewed to basic and acidic residues; it reads AKERAEDYIE. The segment covering 34-44 has biased composition (polar residues); that stretch reads SHSSGQETGDY. Residues 54 to 71 show a composition bias toward acidic residues; sequence DYEDLGDYDEDADFDNEE.

Belongs to the UPF0654 (con-6) family.

In Schizosaccharomyces pombe (strain 972 / ATCC 24843) (Fission yeast), this protein is UPF0654 protein C22G7.11c.